The sequence spans 202 residues: MVQRLCTSVAALSLALSACVFFPRAVMAIDLSRFYGHFNTKRSGDACRPYEPFKCPGDDTCISIQYLCDGAPDCQDGYDEDSRLCTAAKRPPVEETASFLQSLLASHGPNYLEKLFGTKARDTLKPLGGVNTVAIALSESQTIEDFGAALHLLRTDLEHLRSVFMAVENGDLGMLKSIGIKDSELGDVKFFLEKLVKTGFLD.

A signal peptide spans 1-28; it reads MVQRLCTSVAALSLALSACVFFPRAVMA. The region spanning 46–86 is the LDL-receptor class A domain; the sequence is ACRPYEPFKCPGDDTCISIQYLCDGAPDCQDGYDEDSRLCT. Cystine bridges form between Cys-47-Cys-61, Cys-55-Cys-74, and Cys-68-Cys-85.

The protein resides in the secreted. The polypeptide is Prohormone-4 (Apis mellifera (Honeybee)).